The sequence spans 353 residues: Photosystem II protein D1 (353 aa).

Thr2 bears the N-acetylthreonine mark. The residue at position 2 (Thr2) is a Phosphothreonine. The next 3 helical transmembrane spans lie at 29 to 46 (YIGW…TATS), 118 to 133 (HFLL…EWEL), and 142 to 156 (WIAV…AATA). His118 contributes to the chlorophyll a binding site. Tyr126 serves as a coordination point for pheophytin a. The [CaMn4O5] cluster site is built by Asp170 and Glu189. The helical transmembrane segment at 197-218 (FHMLGVAGVFGGSLFSAMHGSL) threads the bilayer. Chlorophyll a is bound at residue His198. Residues His215 and 264 to 265 (SF) contribute to the a quinone site. His215 lines the Fe cation pocket. His272 provides a ligand contact to Fe cation. Residues 274–288 (FLAAWPVVGIWFTAL) form a helical membrane-spanning segment. Residues His332, Glu333, Asp342, and Ala344 each coordinate [CaMn4O5] cluster. Positions 345–353 (AVEVPAING) are excised as a propeptide.

This sequence belongs to the reaction center PufL/M/PsbA/D family. In terms of assembly, PSII is composed of 1 copy each of membrane proteins PsbA, PsbB, PsbC, PsbD, PsbE, PsbF, PsbH, PsbI, PsbJ, PsbK, PsbL, PsbM, PsbT, PsbX, PsbY, PsbZ, Psb30/Ycf12, at least 3 peripheral proteins of the oxygen-evolving complex and a large number of cofactors. It forms dimeric complexes. The D1/D2 heterodimer binds P680, chlorophylls that are the primary electron donor of PSII, and subsequent electron acceptors. It shares a non-heme iron and each subunit binds pheophytin, quinone, additional chlorophylls, carotenoids and lipids. D1 provides most of the ligands for the Mn4-Ca-O5 cluster of the oxygen-evolving complex (OEC). There is also a Cl(-1) ion associated with D1 and D2, which is required for oxygen evolution. The PSII complex binds additional chlorophylls, carotenoids and specific lipids. serves as cofactor. Tyr-161 forms a radical intermediate that is referred to as redox-active TyrZ, YZ or Y-Z. In terms of processing, C-terminally processed by CTPA; processing is essential to allow assembly of the oxygen-evolving complex and thus photosynthetic growth.

It localises to the plastid. The protein resides in the chloroplast thylakoid membrane. It catalyses the reaction 2 a plastoquinone + 4 hnu + 2 H2O = 2 a plastoquinol + O2. Its function is as follows. Photosystem II (PSII) is a light-driven water:plastoquinone oxidoreductase that uses light energy to abstract electrons from H(2)O, generating O(2) and a proton gradient subsequently used for ATP formation. It consists of a core antenna complex that captures photons, and an electron transfer chain that converts photonic excitation into a charge separation. The D1/D2 (PsbA/PsbD) reaction center heterodimer binds P680, the primary electron donor of PSII as well as several subsequent electron acceptors. The polypeptide is Photosystem II protein D1 (Hordeum vulgare (Barley)).